Consider the following 252-residue polypeptide: Imidazole glycerol phosphate synthase subunit HisF (252 aa).

Residues Asp11 and Asp130 contribute to the active site.

The protein belongs to the HisA/HisF family. As to quaternary structure, heterodimer of HisH and HisF.

Its subcellular location is the cytoplasm. It catalyses the reaction 5-[(5-phospho-1-deoxy-D-ribulos-1-ylimino)methylamino]-1-(5-phospho-beta-D-ribosyl)imidazole-4-carboxamide + L-glutamine = D-erythro-1-(imidazol-4-yl)glycerol 3-phosphate + 5-amino-1-(5-phospho-beta-D-ribosyl)imidazole-4-carboxamide + L-glutamate + H(+). It participates in amino-acid biosynthesis; L-histidine biosynthesis; L-histidine from 5-phospho-alpha-D-ribose 1-diphosphate: step 5/9. In terms of biological role, IGPS catalyzes the conversion of PRFAR and glutamine to IGP, AICAR and glutamate. The HisF subunit catalyzes the cyclization activity that produces IGP and AICAR from PRFAR using the ammonia provided by the HisH subunit. The sequence is that of Imidazole glycerol phosphate synthase subunit HisF from Azobacteroides pseudotrichonymphae genomovar. CFP2.